Here is a 370-residue protein sequence, read N- to C-terminus: Neutral protease 2 homolog AFUA_4G13750 (370 aa).

Positions 1-19 (MKVTILASAILALINGALA) are cleaved as a signal peptide. A propeptide spanning residues 20–172 (LPANTPTLDV…PQAIKLLDRR (153 aa)) is cleaved from the precursor. 2 disulfide bridges follow: Cys-178–Cys-250 and Cys-257–Cys-275. His-300 lines the Zn(2+) pocket. Glu-301 is an active-site residue. Zn(2+) contacts are provided by His-304 and Asp-315.

It belongs to the peptidase M35 family. Zn(2+) serves as cofactor.

The protein resides in the secreted. It catalyses the reaction Preferential cleavage of bonds with hydrophobic residues in P1'. Also 3-Asn-|-Gln-4 and 8-Gly-|-Ser-9 bonds in insulin B chain.. In terms of biological role, secreted metalloproteinase that allows assimilation of proteinaceous substrates. Shows high activities on basic nuclear substrates such as histone and protamine. May be involved in virulence. The protein is Neutral protease 2 homolog AFUA_4G13750 of Aspergillus fumigatus (strain ATCC MYA-4609 / CBS 101355 / FGSC A1100 / Af293) (Neosartorya fumigata).